The chain runs to 513 residues: uncharacterized protein (513 aa).

The next 5 helical transmembrane spans lie at 262–282 (FAIF…FWQL), 304–324 (YMFL…ITYH), 341–361 (EPIP…FEAL), 382–402 (LVIG…VIIV), and 429–449 (MFLA…ILVL). The segment at 489–513 (PGTYSRGNGQKGAKREDPKDEENNI) is disordered. Positions 501–513 (AKREDPKDEENNI) are enriched in basic and acidic residues.

The protein belongs to the GerABKA family.

Its subcellular location is the cell membrane. This is an uncharacterized protein from Bacillus subtilis (strain 168).